The sequence spans 394 residues: 1-deoxy-D-xylulose 5-phosphate reductoisomerase (394 aa).

Residues Thr13, Gly14, Ser15, Val16, Arg40, Gln41, and Asn127 each coordinate NADPH. Lys128 contacts 1-deoxy-D-xylulose 5-phosphate. Glu129 serves as a coordination point for NADPH. Residue Asp153 coordinates Mn(2+). 4 residues coordinate 1-deoxy-D-xylulose 5-phosphate: Ser154, Glu155, Ser184, and His207. Glu155 provides a ligand contact to Mn(2+). Gly213 serves as a coordination point for NADPH. 1-deoxy-D-xylulose 5-phosphate is bound by residues Ser220, Asn225, Lys226, and Glu229. Glu229 contacts Mn(2+).

This sequence belongs to the DXR family. The cofactor is Mg(2+). It depends on Mn(2+) as a cofactor.

It catalyses the reaction 2-C-methyl-D-erythritol 4-phosphate + NADP(+) = 1-deoxy-D-xylulose 5-phosphate + NADPH + H(+). Its pathway is isoprenoid biosynthesis; isopentenyl diphosphate biosynthesis via DXP pathway; isopentenyl diphosphate from 1-deoxy-D-xylulose 5-phosphate: step 1/6. Catalyzes the NADPH-dependent rearrangement and reduction of 1-deoxy-D-xylulose-5-phosphate (DXP) to 2-C-methyl-D-erythritol 4-phosphate (MEP). The sequence is that of 1-deoxy-D-xylulose 5-phosphate reductoisomerase from Chromobacterium violaceum (strain ATCC 12472 / DSM 30191 / JCM 1249 / CCUG 213 / NBRC 12614 / NCIMB 9131 / NCTC 9757 / MK).